Reading from the N-terminus, the 348-residue chain is D-alanine--D-alanine ligase (348 aa).

An ATP-grasp domain is found at 132–334; sequence KRVLESIGIP…YPDLIEVLVT (203 aa). 162–217 is an ATP binding site; sequence LARLTFPIFVKPANMGSSVGISKAQTKVELRKAIQLALTYDSRVLIEQGVVAREIE. Aspartate 288, glutamate 301, and asparagine 303 together coordinate Mg(2+).

This sequence belongs to the D-alanine--D-alanine ligase family. Requires Mg(2+) as cofactor. It depends on Mn(2+) as a cofactor.

The protein resides in the cytoplasm. It carries out the reaction 2 D-alanine + ATP = D-alanyl-D-alanine + ADP + phosphate + H(+). Its pathway is cell wall biogenesis; peptidoglycan biosynthesis. Cell wall formation. This Streptococcus pyogenes serotype M2 (strain MGAS10270) protein is D-alanine--D-alanine ligase.